The primary structure comprises 364 residues: Isopentenyl-diphosphate delta-isomerase (364 aa).

Residues 1–13 are compositionally biased toward basic and acidic residues; sequence MSSAQRKDDHVRL. The tract at residues 1 to 24 is disordered; it reads MSSAQRKDDHVRLATEQQRAHSGR. 6 to 7 is a substrate binding site; it reads RK. FMN-binding positions include 64 to 66, Ser-94, and Asn-123; that span reads AMT. 94–96 is a binding site for substrate; that stretch reads SMH. Residue Gln-153 participates in substrate binding. A Mg(2+)-binding site is contributed by Glu-154. FMN-binding positions include Lys-185, Ser-210, Thr-215, 259–261, and 280–281; these read GIR and SG.

It belongs to the IPP isomerase type 2 family. In terms of assembly, homooctamer. Dimer of tetramers. The cofactor is FMN. NADPH serves as cofactor. It depends on Mg(2+) as a cofactor.

Its subcellular location is the cytoplasm. It carries out the reaction isopentenyl diphosphate = dimethylallyl diphosphate. Functionally, involved in the biosynthesis of isoprenoids. Catalyzes the 1,3-allylic rearrangement of the homoallylic substrate isopentenyl (IPP) to its allylic isomer, dimethylallyl diphosphate (DMAPP). The chain is Isopentenyl-diphosphate delta-isomerase from Kitasatospora griseola (Streptomyces griseolosporeus).